The following is a 265-amino-acid chain: Undecaprenyl-diphosphatase 1 (265 aa).

Helical transmembrane passes span 4–24, 42–62, 84–104, 108–128, 184–204, 217–237, and 245–265; these read IITAFILGIVEGLAEFLPISS, AKTFEIVIQLGAILAIAILYH, FHVFLGVFPAVVAGLLLHDII, LFQPYTVVIGLVAGAILMIFA, SEFSFLIALPVMVGATGLDLL, MFAVGFITSFIVAMLAVVTFL, and LKPFAYYRILLAILFTVFVLL.

It belongs to the UppP family.

The protein resides in the cell membrane. It catalyses the reaction di-trans,octa-cis-undecaprenyl diphosphate + H2O = di-trans,octa-cis-undecaprenyl phosphate + phosphate + H(+). Catalyzes the dephosphorylation of undecaprenyl diphosphate (UPP). Confers resistance to bacitracin. The chain is Undecaprenyl-diphosphatase 1 from Bacillus thuringiensis subsp. konkukian (strain 97-27).